We begin with the raw amino-acid sequence, 75 residues long: DNA-directed RNA polymerase subunit omega (75 aa).

This sequence belongs to the RNA polymerase subunit omega family. As to quaternary structure, in cyanobacteria the RNAP catalytic core is composed of 2 alpha, 1 beta, 1 beta', 1 gamma and 1 omega subunit. When a sigma factor is associated with the core the holoenzyme is formed, which can initiate transcription.

The catalysed reaction is RNA(n) + a ribonucleoside 5'-triphosphate = RNA(n+1) + diphosphate. Promotes RNA polymerase assembly. Latches the N- and C-terminal regions of the beta' subunit thereby facilitating its interaction with the beta and alpha subunits. The sequence is that of DNA-directed RNA polymerase subunit omega from Prochlorococcus marinus (strain MIT 9211).